The primary structure comprises 480 residues: Alpha-glucosidase (480 aa).

Position 4–70 (4–70 (VKIGIIGAGS…ADLKFEKTMN (67 aa))) interacts with NAD(+). Residues aspartate 119 and asparagine 153 each coordinate substrate. A Mn(2+)-binding site is contributed by cysteine 174. Histidine 175 functions as the Proton donor in the catalytic mechanism. A Mn(2+)-binding site is contributed by histidine 203. Aspartate 260 serves as the catalytic Proton acceptor.

It belongs to the glycosyl hydrolase 4 family. As to quaternary structure, homodimer. NAD(+) serves as cofactor. The cofactor is Mn(2+). It depends on Co(2+) as a cofactor. Ni(2+) is required as a cofactor.

It catalyses the reaction Hydrolysis of terminal, non-reducing (1-&gt;4)-linked alpha-D-glucose residues with release of alpha-D-glucose.. Its activity is regulated as follows. Inhibited by Hg(2+) ion and EDTA. Alpha-glycosidase with a very broad specificity. Hydrolyzes maltose and other small maltooligosaccharides but is inactive against the polymeric substrate starch. AglA is not specific with respect to the configuration at the C-4 position of its substrates because glycosidic derivatives of D-galactose are also hydrolyzed. Does not cleave beta-glycosidic bonds. The polypeptide is Alpha-glucosidase (aglA) (Thermotoga maritima (strain ATCC 43589 / DSM 3109 / JCM 10099 / NBRC 100826 / MSB8)).